Here is a 130-residue protein sequence, read N- to C-terminus: Large ribosomal subunit protein bL19 (130 aa).

This sequence belongs to the bacterial ribosomal protein bL19 family.

In terms of biological role, this protein is located at the 30S-50S ribosomal subunit interface and may play a role in the structure and function of the aminoacyl-tRNA binding site. The protein is Large ribosomal subunit protein bL19 of Parvibaculum lavamentivorans (strain DS-1 / DSM 13023 / NCIMB 13966).